A 384-amino-acid polypeptide reads, in one-letter code: Sodium channel protein Nach (384 aa).

The Extracellular segment spans residues 1-319 (AAFAYFSGFM…LVSHLGSAFS (319 aa)). Asn32 and Asn215 each carry an N-linked (GlcNAc...) asparagine glycan. A helical membrane pass occupies residues 320 to 340 (LFVGMSMLSLVEIIYYFTVIL). At 341–384 (RRNYVQECRARQKLQTLHRRPNFGWPGDKNSNQQKSVFYIRGRN) the chain is on the cytoplasmic side.

It belongs to the amiloride-sensitive sodium channel (TC 1.A.6) family.

It localises to the membrane. Part of a complex that plays a role in tracheal liquid clearance. Probable role in sodium transport. This chain is Sodium channel protein Nach (Nach), found in Drosophila virilis (Fruit fly).